A 439-amino-acid polypeptide reads, in one-letter code: Histidinol dehydrogenase (439 aa).

Residues Tyr-125, Gln-187, and Asn-210 each coordinate NAD(+). 3 residues coordinate substrate: Thr-233, Gln-255, and His-258. Zn(2+) is bound by residues Gln-255 and His-258. Active-site proton acceptor residues include Glu-323 and His-324. Substrate-binding residues include His-324, Asp-357, Glu-411, and His-416. Position 357 (Asp-357) interacts with Zn(2+). His-416 contributes to the Zn(2+) binding site.

This sequence belongs to the histidinol dehydrogenase family. Requires Zn(2+) as cofactor.

It carries out the reaction L-histidinol + 2 NAD(+) + H2O = L-histidine + 2 NADH + 3 H(+). Its pathway is amino-acid biosynthesis; L-histidine biosynthesis; L-histidine from 5-phospho-alpha-D-ribose 1-diphosphate: step 9/9. Its function is as follows. Catalyzes the sequential NAD-dependent oxidations of L-histidinol to L-histidinaldehyde and then to L-histidine. The polypeptide is Histidinol dehydrogenase (Symbiobacterium thermophilum (strain DSM 24528 / JCM 14929 / IAM 14863 / T)).